Reading from the N-terminus, the 256-residue chain is Protein FixA (256 aa).

Belongs to the ETF beta-subunit/FixA family. Heterodimer of FixA and FixB.

It participates in amine and polyamine metabolism; carnitine metabolism. Required for anaerobic carnitine reduction. May bring reductant to CaiA. This is Protein FixA from Salmonella paratyphi B (strain ATCC BAA-1250 / SPB7).